Consider the following 248-residue polypeptide: Protein GrpE (248 aa).

A disordered region spans residues 229 to 248 (AAPKEDTLPAQENQSSPADS). Residues 238 to 248 (AQENQSSPADS) show a composition bias toward polar residues.

Belongs to the GrpE family. Homodimer.

It localises to the cytoplasm. Participates actively in the response to hyperosmotic and heat shock by preventing the aggregation of stress-denatured proteins, in association with DnaK and GrpE. It is the nucleotide exchange factor for DnaK and may function as a thermosensor. Unfolded proteins bind initially to DnaJ; upon interaction with the DnaJ-bound protein, DnaK hydrolyzes its bound ATP, resulting in the formation of a stable complex. GrpE releases ADP from DnaK; ATP binding to DnaK triggers the release of the substrate protein, thus completing the reaction cycle. Several rounds of ATP-dependent interactions between DnaJ, DnaK and GrpE are required for fully efficient folding. The protein is Protein GrpE of Trichormus variabilis (strain ATCC 29413 / PCC 7937) (Anabaena variabilis).